The following is a 179-amino-acid chain: Putative undecaprenyl-phosphate N-acetylgalactosaminyl 1-phosphate transferase (179 aa).

The chain crosses the membrane as a helical span at residues 39 to 59 (IWFALIGLAIALPMIAVFSIL).

The protein belongs to the bacterial sugar transferase family.

The protein localises to the cell membrane. The enzyme catalyses di-trans,octa-cis-undecaprenyl phosphate + UDP-N-acetyl-alpha-D-galactosamine = N-acetyl-alpha-D-galactosaminyl-di-trans,octa-cis-undecaprenyl diphosphate + UMP. Its pathway is cell wall biogenesis; teichuronic acid biosynthesis. Might mediate the very first reaction in teichuronic synthesis, i.e. the formation of lipid-linked N-acetylglucosamine. In Bacillus subtilis (strain 168), this protein is Putative undecaprenyl-phosphate N-acetylgalactosaminyl 1-phosphate transferase (tuaA).